A 244-amino-acid polypeptide reads, in one-letter code: Lipid A 1-phosphatase (244 aa).

6 helical membrane-spanning segments follow: residues 28 to 48 (LFVTLNAVILSMLLFDAPIGA), 60 to 80 (ELLTGFGDSAWLIYTSILLFF), 98 to 118 (ALYVSWIGAYLFFTVVFSGLL), 154 to 174 (FPSGHSTTVGAFFAAFALLFP), 178 to 198 (VAFIACAIWLGMTRVMVGAHY), and 201 to 221 (DVIAGLAFGAWFSLLTAIVFA).

It belongs to the lipid A LpxE 1-phosphatase family.

The protein localises to the cell inner membrane. It participates in bacterial outer membrane biogenesis; LPS lipid A biosynthesis. Its function is as follows. Removes the 1-phosphate group from (tetraacyl) lipid A species, has no requirement for the Kdo(2) moiety of lipid A. Has no 4'-phosphatase activity. Reduces sensitivity of S.meliloti strain 1021 to the cationic antimicrobial peptide (CAMP) polymyxin B. The sequence is that of Lipid A 1-phosphatase from Rhizobium johnstonii (strain DSM 114642 / LMG 32736 / 3841) (Rhizobium leguminosarum bv. viciae).